Consider the following 341-residue polypeptide: Ribosomal RNA small subunit methyltransferase H (341 aa).

Residues 47 to 49 (GGY), Asp-64, Phe-91, Asp-109, and Gln-116 each bind S-adenosyl-L-methionine.

The protein belongs to the methyltransferase superfamily. RsmH family.

The protein localises to the cytoplasm. It catalyses the reaction cytidine(1402) in 16S rRNA + S-adenosyl-L-methionine = N(4)-methylcytidine(1402) in 16S rRNA + S-adenosyl-L-homocysteine + H(+). Specifically methylates the N4 position of cytidine in position 1402 (C1402) of 16S rRNA. The chain is Ribosomal RNA small subunit methyltransferase H from Rhizobium etli (strain ATCC 51251 / DSM 11541 / JCM 21823 / NBRC 15573 / CFN 42).